The sequence spans 30 residues: Fimbrial assembly protein, serogroup B1 (30 aa).

The protein is Fimbrial assembly protein, serogroup B1 (fimB) of Dichelobacter nodosus (Bacteroides nodosus).